A 286-amino-acid chain; its full sequence is 4-diphosphocytidyl-2-C-methyl-D-erythritol kinase (286 aa).

Lys12 is an active-site residue. Residue 96–106 participates in ATP binding; that stretch reads PHGAGLGGGSA. The active site involves Asp138.

This sequence belongs to the GHMP kinase family. IspE subfamily.

The catalysed reaction is 4-CDP-2-C-methyl-D-erythritol + ATP = 4-CDP-2-C-methyl-D-erythritol 2-phosphate + ADP + H(+). It participates in isoprenoid biosynthesis; isopentenyl diphosphate biosynthesis via DXP pathway; isopentenyl diphosphate from 1-deoxy-D-xylulose 5-phosphate: step 3/6. Functionally, catalyzes the phosphorylation of the position 2 hydroxy group of 4-diphosphocytidyl-2C-methyl-D-erythritol. In Nitratidesulfovibrio vulgaris (strain DP4) (Desulfovibrio vulgaris), this protein is 4-diphosphocytidyl-2-C-methyl-D-erythritol kinase.